A 63-amino-acid polypeptide reads, in one-letter code: UPF0370 protein PC1_1167 (63 aa).

The helical transmembrane segment at 3–23 threads the bilayer; sequence WLADYWWIILIILIGMLINGI. The segment at 37–63 is disordered; it reads NKPKLPPHRDNNDKWDDEDDDWPKKKP.

It belongs to the UPF0370 family.

It localises to the cell membrane. The sequence is that of UPF0370 protein PC1_1167 from Pectobacterium carotovorum subsp. carotovorum (strain PC1).